Consider the following 793-residue polypeptide: MWIQVRTMDGRQTHTVDSLSRLTKVEELRRKIQELFHVEPGLQRLFYRGKQMEDGHTLFDYEVRLNDTIQLLVRQSLVLPHSTKERDSELSDTDSGCCLGQSESDKSSTHGEAAAETDSRPADEDMWDETELGLYKVNEYVDARDTNMGAWFEAQVVRVTRKAPSRDEPCSSTSRPALEEDVIYHVKYDDYPENGVVQMNSRDVRARARTIIKWQDLEVGQVVMLNYNPDNPKERGFWYDAEISRKRETRTARELYANVVLGDDSLNDCRIIFVDEVFKIERPGEGSPMVDNPMRRKSGPSCKHCKDDVNRLCRVCACHLCGGRQDPDKQLMCDECDMAFHIYCLDPPLSSVPSEDEWYCPECRNDASEVVLAGERLRESKKKAKMASATSSSQRDWGKGMACVGRTKECTIVPSNHYGPIPGIPVGTMWRFRVQVSESGVHRPHVAGIHGRSNDGAYSLVLAGGYEDDVDHGNFFTYTGSGGRDLSGNKRTAEQSCDQKLTNTNRALALNCFAPINDQEGAEAKDWRSGKPVRVVRNVKGGKNSKYAPAEGNRYDGIYKVVKYWPEKGKSGFLVWRYLLRRDDDEPGPWTKEGKDRIKKLGLTMQYPEGYLEALANREREKENSKREEEEQQEGGFASPRTGKGKWKRKSAGGGPSRAGSPRRTSKKTKVEPYSLTAQQSSLIREDKSNAKLWNEVLASLKDRPASGSPFQLFLSKVEETFQCICCQELVFRPITTVCQHNVCKDCLDRSFRAQVFSCPACRYDLGRSYAMQVNQPLQTVLNQLFPGYGNGR.

Residues 1–78 form the Ubiquitin-like domain; that stretch reads MWIQVRTMDG…IQLLVRQSLV (78 aa). S76, S91, S95, and S165 each carry phosphoserine. The interval 82-124 is disordered; that stretch reads STKERDSELSDTDSGCCLGQSESDKSSTHGEAAAETDSRPADE. 2 tudor-like regions span residues 133 to 209 and 216 to 283; these read GLYK…ARAR and DLEV…IERP. K279 participates in a covalent cross-link: Glycyl lysine isopeptide (Lys-Gly) (interchain with G-Cter in SUMO2). A Phosphoserine modification is found at S287. Residues 296 to 301 form a linker region; the sequence is RKSGPS. At S298 the chain carries Phosphoserine; by PKA. Residues 310–366 form a PHD-type zinc finger; sequence NRLCRVCACHLCGGRQDPDKQLMCDECDMAFHIYCLDPPLSSVPSEDEWYCPECRND. Histone H3R2me0 binding stretches follow at residues 333 to 337 and 353 to 355; these read CDECD and PSE. The residue at position 368 (S368) is a Phosphoserine. K385 is covalently cross-linked (Glycyl lysine isopeptide (Lys-Gly) (interchain with G-Cter in SUMO2)). N6-acetyllysine is present on K399. The YDG domain maps to 419–582; the sequence is GPIPGIPVGT…FLVWRYLLRR (164 aa). The tract at residues 445–446 is required to promote base flipping; that stretch reads HV. DNA-binding positions include 463–464 and D469; that span reads AG. Required for formation of a 5-methylcytosine-binding pocket regions lie at residues 466-469 and 478-481; these read YEDD and YTGS. K546 is modified (N6-acetyllysine; alternate). K546 is covalently cross-linked (Glycyl lysine isopeptide (Lys-Gly) (interchain with G-Cter in SUMO2); alternate). Basic and acidic residues predominate over residues 618-629; that stretch reads REREKENSKREE. Residues 618 to 673 form a disordered region; it reads REREKENSKREEEEQQEGGFASPRTGKGKWKRKSAGGGPSRAGSPRRTSKKTKVEP. Phosphoserine; by CDK1 is present on S639. S651 is modified (phosphoserine). Residue K670 forms a Glycyl lysine isopeptide (Lys-Gly) (interchain with G-Cter in SUMO2) linkage. Phosphoserine is present on residues S707 and S709. The RING-type zinc finger occupies 724 to 763; sequence CICCQELVFRPITTVCQHNVCKDCLDRSFRAQVFSCPACR.

In terms of assembly, interacts with DNMT3A and DNMT3B. Interacts with DNMT1; the interaction is direct. Interacts with USP7; leading to its deubiquitination. Interacts with histone H3. Interacts with HDAC1, but not with HDAC2. Interacts with BLTP3A. Interacts with PML. Interacts with EHMT2. Binds hemimethylated CpG containing oligonucleotides. Interacts with ZNF263; recruited to the SIX3 promoter along with other proteins involved in chromatin modification and transcriptional corepression where it contributes to transcriptional repression. Interacts with UHRF2. Interacts with FANCD2. Interacts with TET1 isoform 2; this interaction induces the recruitment of TET1 isoform 2 to replicating heterochromatin. Phosphorylation at Ser-298 of the linker region decreases the binding to H3K9me3. Phosphorylation at Ser-639 by CDK1 during M phase impairs interaction with USP7, preventing deubiquitination and leading to degradation by the proteasome. In terms of processing, ubiquitinated; which leads to proteasomal degradation. Autoubiquitinated; interaction with USP7 leads to deubiquitination and prevents degradation. Ubiquitination and degradation takes place during M phase, when phosphorylation at Ser-639 prevents interaction with USP7 and subsequent deubiquitination. Polyubiquitination may be stimulated by DNA damage. As to expression, expressed in thymus, bone marrow, testis, lung and heart. Overexpressed in breast cancer.

It is found in the nucleus. The catalysed reaction is S-ubiquitinyl-[E2 ubiquitin-conjugating enzyme]-L-cysteine + [acceptor protein]-L-lysine = [E2 ubiquitin-conjugating enzyme]-L-cysteine + N(6)-ubiquitinyl-[acceptor protein]-L-lysine.. It functions in the pathway protein modification; protein ubiquitination. Its function is as follows. Multidomain protein that acts as a key epigenetic regulator by bridging DNA methylation and chromatin modification. Specifically recognizes and binds hemimethylated DNA at replication forks via its YDG domain and recruits DNMT1 methyltransferase to ensure faithful propagation of the DNA methylation patterns through DNA replication. In addition to its role in maintenance of DNA methylation, also plays a key role in chromatin modification: through its tudor-like regions and PHD-type zinc fingers, specifically recognizes and binds histone H3 trimethylated at 'Lys-9' (H3K9me3) and unmethylated at 'Arg-2' (H3R2me0), respectively, and recruits chromatin proteins. Enriched in pericentric heterochromatin where it recruits different chromatin modifiers required for this chromatin replication. Also localizes to euchromatic regions where it negatively regulates transcription possibly by impacting DNA methylation and histone modifications. Has E3 ubiquitin-protein ligase activity by mediating the ubiquitination of target proteins such as histone H3 and PML. It is still unclear how E3 ubiquitin-protein ligase activity is related to its role in chromatin in vivo. Plays a role in DNA repair by cooperating with UHRF2 to ensure recruitment of FANCD2 to interstrand cross-links (ICLs) leading to FANCD2 activation. Acts as a critical player of proper spindle architecture by catalyzing the 'Lys-63'-linked ubiquitination of KIF11, thereby controlling KIF11 localization on the spindle. The chain is E3 ubiquitin-protein ligase UHRF1 (UHRF1) from Homo sapiens (Human).